The following is an 874-amino-acid chain: Ectonucleotide pyrophosphatase/phosphodiesterase family member 3 (874 aa).

Over 1–11 (MQSTLNLSTEE) the chain is Cytoplasmic. The helical; Signal-anchor for type II membrane protein transmembrane segment at 12–30 (PVKRNTVKKYKIICIVLLI) threads the bilayer. The Extracellular segment spans residues 31 to 874 (LLVAVSLALG…TYLPVFETVI (844 aa)). SMB domains follow at residues 50–93 (EQGS…VQST) and 94–138 (QIWT…GETS). 10 disulfide bridges follow: Cys54/Cys71, Cys58/Cys89, Cys69/Cys82, Cys75/Cys81, Cys98/Cys115, Cys103/Cys133, Cys113/Cys126, Cys119/Cys125, Cys144/Cys190, and Cys152/Cys364. A Cell attachment site motif is present at residues 78–80 (RGD). The tract at residues 160-544 (PVILFSMDGF…HGSLNHLLKV (385 aa)) is phosphodiesterase. Asp167 contacts Zn(2+). Lys204 is an ATP binding site. Thr205 contacts Zn(2+). Thr205 acts as the Nucleophile in catalysis. An ATP-binding site is contributed by Asn226. A glycan (N-linked (GlcNAc...) asparagine) is linked at Asn236. Asp275 is an ATP binding site. The N-linked (GlcNAc...) asparagine glycan is linked to Asn279. Tyr289 is a binding site for ATP. N-linked (GlcNAc...) asparagine glycosylation occurs at Asn290. Zn(2+) contacts are provided by Asp325, His329, Asp372, and His373. 6 disulfides stabilise this stretch: Cys380-Cys477, Cys428-Cys817, Cys561-Cys622, Cys574-Cys678, Cys576-Cys663, and Cys786-Cys796. N-linked (GlcNAc...) asparagine glycosylation occurs at Asn425. His482 contributes to the Zn(2+) binding site. Asn532 carries N-linked (GlcNAc...) asparagine glycosylation. A nuclease region spans residues 581–874 (TNSDLERVNQ…TYLPVFETVI (294 aa)). Residues Asn677, Asn686, and Asn698 are each glycosylated (N-linked (GlcNAc...) asparagine). Residues Asp751, Asp755, His757, and Asp759 each contribute to the Ca(2+) site. Residues Asn770, Asn788, and Asn820 are each glycosylated (N-linked (GlcNAc...) asparagine).

This sequence belongs to the nucleotide pyrophosphatase/phosphodiesterase family. In terms of assembly, monomer and homodimer. Zn(2+) is required as a cofactor. N-glycosylated. N-glycosylation is necessary for normal transport to the cell membrane, but is not the apical targeting signal.

It localises to the cell membrane. Its subcellular location is the apical cell membrane. The protein resides in the secreted. The catalysed reaction is a ribonucleoside 5'-triphosphate + H2O = a ribonucleoside 5'-phosphate + diphosphate + H(+). The enzyme catalyses ATP + H2O = AMP + diphosphate + H(+). It catalyses the reaction CTP + H2O = CMP + diphosphate + H(+). It carries out the reaction GTP + H2O = GMP + diphosphate + H(+). The catalysed reaction is UTP + H2O = UMP + diphosphate + H(+). The enzyme catalyses UDP-N-acetyl-alpha-D-glucosamine + H2O = N-acetyl-alpha-D-glucosamine 1-phosphate + UMP + 2 H(+). It catalyses the reaction P(1),P(3)-bis(5'-adenosyl) triphosphate + H2O = AMP + ADP + 2 H(+). It carries out the reaction P(1),P(4)-bis(5'-adenosyl) tetraphosphate + H2O = AMP + ATP + 2 H(+). The catalysed reaction is P(1),P(5)-bis(5'-adenosyl) pentaphosphate + H2O = adenosine 5'-tetraphosphate + AMP + 2 H(+). The enzyme catalyses P(1),P(4)-bis(5'-guanosyl) tetraphosphate + H2O = GMP + GTP + 2 H(+). It catalyses the reaction Hydrolytically removes 5'-nucleotides successively from the 3'-hydroxy termini of 3'-hydroxy-terminated oligonucleotides.. In terms of biological role, hydrolase that metabolizes extracellular nucleotides, including ATP, GTP, UTP and CTP. Limits mast cells and basophils response during inflammation and during the chronic phases of allergic responses by eliminating extracellular ATP, a signaling molecule activating these cells in an autocrine manner. Metabolizes extracellular ATP in the lumen of the small intestine, and thereby prevents ATP-induced apoptosis of intestinal plasmacytoid dendritic cells. Has a broad specificity and can also hydrolyze UDP-GlcNAc into UMP and GlcNAc-1-phosphate and potentially several other intracellular nucleotide sugars, including UDP-GalNAc, CMP-NeuAc, GDP-Fuc, and UDP-GlcA. Thereby, could modulate glycan biosynthesis and protein glycosylation. Can hydrolyze extracellular dinucleoside polyphosphates, including the vasoactive adenosine polyphosphates as well. In addition, displays an alkaline phosphodiesterase activity in vitro. The sequence is that of Ectonucleotide pyrophosphatase/phosphodiesterase family member 3 (ENPP3) from Bos taurus (Bovine).